Here is a 318-residue protein sequence, read N- to C-terminus: Aquaporin-1 (318 aa).

The segment covering 1–16 (MVQFGSRANTNMTGLP) has biased composition (polar residues). A disordered region spans residues 1 to 27 (MVQFGSRANTNMTGLPTEQAVEDRRVG). The Cytoplasmic portion of the chain corresponds to 1-36 (MVQFGSRANTNMTGLPTEQAVEDRRVGNPKRDRMRN). Residues 37-57 (ALVIVLGEFCGTFMFLLLSFI) form a helical membrane-spanning segment. At 58 to 77 (GAQTALVTNSPSDAGSPLLP) the chain is on the extracellular side. Residues 78 to 98 (FSLMYIAASFGTALAVNVWIF) form a helical membrane-spanning segment. The Cytoplasmic segment spans residues 99-108 (YRVSGGMFNP). The short motif at 107–109 (NPA) is the NPA 1 element. Residues 109 to 129 (AVTLGLVLVGAVTPIHALLII) traverse the membrane as a helical segment. Residues 130-165 (PTQLVAAITAAGITDALLPGKLLVTNALGNGTSVAQ) lie on the Extracellular side of the membrane. An N-linked (GlcNAc...) asparagine glycan is attached at Asn-159. Residues 166 to 186 (GVFIEMFLTSQLVLTVYFLAV) traverse the membrane as a helical segment. Residues 187-193 (EKHRSTH) are Cytoplasmic-facing. Residues 194 to 214 (LAPIGIGISVFIAHICATNWT) form a helical membrane-spanning segment. Residues 215–236 (GTSINPARSFGPSVVAGFHGYD) lie on the Extracellular side of the membrane. Residues 219–221 (NPA) carry the NPA 2 motif. A helical transmembrane segment spans residues 237-257 (WIYYIGPFMGSLLAFGCYKIF). The Cytoplasmic portion of the chain corresponds to 258–318 (KVLEYQTANP…NDSVIDDQMV (61 aa)). A disordered region spans residues 268 to 318 (GQDDDNLDRSGHHHFFGHRKEPMPHTHTDNIEPKDHGVPQRNDSVIDDQMV). A compositionally biased stretch (basic and acidic residues) spans 285–305 (HRKEPMPHTHTDNIEPKDHGV).

It belongs to the MIP/aquaporin (TC 1.A.8) family.

Its subcellular location is the nucleus membrane. It catalyses the reaction H2O(in) = H2O(out). Functionally, probable water channel involved in responses to changes in environmental conditions and conidiation. Involved in responses to hyperosmotic conditions, oxidative stress and cell wall destabilization. Also required for proper transcriptional activation of genes involved in aurofusarin biosynthesis. Not involved in pathogenicity, but negatively regulates deoxynivalenol (DON) production. This is Aquaporin-1 from Gibberella zeae (strain ATCC MYA-4620 / CBS 123657 / FGSC 9075 / NRRL 31084 / PH-1) (Wheat head blight fungus).